We begin with the raw amino-acid sequence, 357 residues long: 3-dehydroquinate synthase (357 aa).

Residues 104-108 (GVVGD), 128-129 (TT), Lys141, and 168-171 (FLET) each bind NAD(+). Residues Glu183, His243, and His260 each contribute to the Zn(2+) site.

It belongs to the sugar phosphate cyclases superfamily. Dehydroquinate synthase family. It depends on Co(2+) as a cofactor. Requires Zn(2+) as cofactor. The cofactor is NAD(+).

The protein resides in the cytoplasm. The catalysed reaction is 7-phospho-2-dehydro-3-deoxy-D-arabino-heptonate = 3-dehydroquinate + phosphate. It functions in the pathway metabolic intermediate biosynthesis; chorismate biosynthesis; chorismate from D-erythrose 4-phosphate and phosphoenolpyruvate: step 2/7. Functionally, catalyzes the conversion of 3-deoxy-D-arabino-heptulosonate 7-phosphate (DAHP) to dehydroquinate (DHQ). This is 3-dehydroquinate synthase from Streptococcus pyogenes serotype M49 (strain NZ131).